The following is a 160-amino-acid chain: Interleukin-36 alpha (160 aa).

Residues 1–7 constitute a propeptide that is removed on maturation; it reads MNKEKEL. Y98 is subject to 3'-nitrotyrosine.

The protein belongs to the IL-1 family. In terms of assembly, interacts with TMED10; the interaction mediates the translocation from the cytoplasm into the ERGIC (endoplasmic reticulum-Golgi intermediate compartment) and thereby secretion. Post-translationally, N-terminal truncation leads to a dramatic enhancement of its activity (&gt;1000-fold). Highly expressed in embryonic tissue and in tissues containing epithelial cells. Elevated expression levels are detected in chronic kidney disease; expressed inepithelia from the distal convoluted tubules (DCTs) to the cortical collecting ducts (CCDs) in single nephrons (at protein level).

It localises to the cytoplasm. The protein resides in the secreted. Functionally, cytokine that binds to and signals through the IL1RL2/IL-36R receptor which in turn activates NF-kappa-B and MAPK signaling pathways in target cells linked to a pro-inflammatory response. Part of the IL-36 signaling system that is thought to be present in epithelial barriers and to take part in local inflammatory response; similar to the IL-1 system with which it shares the coreceptor IL1RAP. Seems to be involved in skin inflammatory response by acting on keratinocytes, dendritic cells and indirectly on T-cells to drive tissue infiltration, cell maturation and cell proliferation. Induces the production of pro-inflammatory cytokines, including IL-12, Il-1 beta, IL-6, TNF-alpha and IL-23 in bone marrow-derived dendritic cells (BMDCs). Involved in dendritic cell maturation by stimulating the surface expression of CD80, CD86 and MHC class II. Induces the production of IFN-gamma, IL-4 and IL-17 by cultured CD4(+) T-cells and splenocytes. May play a role in pro-inflammatory effects in the lung: induces the expression of CXCL1 and CXCL2 in the lung, and the expression of TNF-alpha, IL-36c, IL-1A, IL-1B, CXCL1 and CXCL2 in isolated splenic CD11c(+) alveolar macrophages. May be involved in T-cell maturation by stimulating the surface expression of CD40 and modestly CD80 and CD86 in splenic CD11c(+) cells. May be involved in CD4(+) T-cell proliferation. Induces NF-kappa B activation in macrophages. This is Interleukin-36 alpha from Mus musculus (Mouse).